The sequence spans 432 residues: Serine--tRNA ligase (432 aa).

239–241 contributes to the L-serine binding site; the sequence is TSE. Residue 270–272 participates in ATP binding; it reads RSE. An L-serine-binding site is contributed by Glu293. 357-360 lines the ATP pocket; that stretch reads EISS. Ser392 serves as a coordination point for L-serine.

This sequence belongs to the class-II aminoacyl-tRNA synthetase family. Type-1 seryl-tRNA synthetase subfamily. In terms of assembly, homodimer. The tRNA molecule binds across the dimer.

It localises to the cytoplasm. It catalyses the reaction tRNA(Ser) + L-serine + ATP = L-seryl-tRNA(Ser) + AMP + diphosphate + H(+). The enzyme catalyses tRNA(Sec) + L-serine + ATP = L-seryl-tRNA(Sec) + AMP + diphosphate + H(+). The protein operates within aminoacyl-tRNA biosynthesis; selenocysteinyl-tRNA(Sec) biosynthesis; L-seryl-tRNA(Sec) from L-serine and tRNA(Sec): step 1/1. In terms of biological role, catalyzes the attachment of serine to tRNA(Ser). Is also able to aminoacylate tRNA(Sec) with serine, to form the misacylated tRNA L-seryl-tRNA(Sec), which will be further converted into selenocysteinyl-tRNA(Sec). The sequence is that of Serine--tRNA ligase from Methylibium petroleiphilum (strain ATCC BAA-1232 / LMG 22953 / PM1).